The following is a 1480-amino-acid chain: Heme-responsive zinc finger transcription factor HAP1 (1480 aa).

A compositionally biased stretch (polar residues) spans 1-50 (MSNTPYNSSVPSIASMTQSSVSRSPNMHTATTPGANTSSNSPPLHMSSDS). Positions 1 to 56 (MSNTPYNSSVPSIASMTQSSVSRSPNMHTATTPGANTSSNSPPLHMSSDSSKIKRK) are disordered. Zn(2+) is bound by residues Cys-64, Cys-67, Cys-74, Cys-81, Cys-84, and Cys-93. The segment at residues 64 to 93 (CTICRKRKVKCDKLRPHCQQCTKTGVAHLC) is a DNA-binding region (zn(2)-C6 fungal-type). The stretch at 105–134 (EKELLKDNELKKLRERVKSLEKTLSKVHSS) forms a coiled coil. The segment at 126–208 (KTLSKVHSSP…ANSSSLSISN (83 aa)) is disordered. A compositionally biased stretch (low complexity) spans 130–142 (KVHSSPSSNSLKS). 2 stretches are compositionally biased toward polar residues: residues 143–152 (YNTPESSNLF) and 160–176 (TLVN…SHMH). The segment covering 177–208 (QQQQQQQQQEQQQDFSRSANANANSSSLSISN) has biased composition (low complexity). The interval 244-441 (KGDPYLKLLW…NTIPHHQPQS (198 aa)) is heme-responsive; required for HMC formation. HRM repeat units lie at residues 280–285 (KCPINH), 296–301 (KCPVDH), 320–325 (KCPVDH), 344–349 (RCPVDH), 386–391 (KCPVDH), and 412–417 (RCPIDH). Composition is skewed to polar residues over residues 429-444 (STHN…SGSH) and 703-731 (QLNA…NPTL). Disordered regions lie at residues 429 to 456 (STHN…RKHD) and 703 to 764 (QLNA…KENQ). A compositionally biased stretch (low complexity) spans 732 to 756 (NNNMSAATTNSSSRSGSADSRSGSN). Residues 1189–1194 (KCPVYQ) form an HRM 7 repeat. The disordered stretch occupies residues 1381 to 1408 (TANTDTSANGSALSTLTSPQGSDLASNS). Residues 1385-1408 (DTSANGSALSTLTSPQGSDLASNS) are compositionally biased toward polar residues.

As to quaternary structure, binds DNA as a homodimer. Interacts with SRO9 and YDJ1. In the absence of heme, binds to at least four cellular proteins, including YDJ1 and SRO9, forming a high-molecular-weight complex (HMC) which results in repression of its activity and dictates its DNA-binding specificity.

The protein resides in the nucleus. In terms of biological role, regulation of oxygen dependent gene expression. It modulates the expression of Iso-1 (CYP1) and Iso-2 (CYP3) cytochrome c. In response to heme, promotes transcription of genes encoding functions required for respiration, controlling oxidative damage and repression of anaerobic genes. Binds to the sequence 5'-CGGNNNTNNCGG-3'. Is non-functional in terms of iso-1 cytochrome c expression in strain S288c and its derivatives. The protein is Heme-responsive zinc finger transcription factor HAP1 (HAP1) of Saccharomyces cerevisiae (strain Kyokai no. 7 / NBRC 101557) (Baker's yeast).